Reading from the N-terminus, the 261-residue chain is Chanoclavine-I dehydrogenase easD (261 aa).

The first 20 residues, 1 to 20, serve as a signal peptide directing secretion; it reads MPSMTSKVFAITGGASGIGA. Residue isoleucine 18 coordinates NADP(+). N-linked (GlcNAc...) asparagine glycosylation occurs at asparagine 43. NADP(+)-binding residues include aspartate 66, arginine 132, tyrosine 166, lysine 170, and threonine 201. Residue tyrosine 166 is the Proton donor of the active site. The Lowers pKa of active site Tyr role is filled by lysine 170.

The protein belongs to the short-chain dehydrogenases/reductases (SDR) family. Homotetramer.

It catalyses the reaction chanoclavine-I + NAD(+) = chanoclavine-I aldehyde + NADH + H(+). It participates in alkaloid biosynthesis; ergot alkaloid biosynthesis. Functionally, chanoclavine-I dehydrogenase; part of the gene cluster that mediates the biosynthesis of fungal ergot alkaloid. DmaW catalyzes the first step of ergot alkaloid biosynthesis by condensing dimethylallyl diphosphate (DMAP) and tryptophan to form 4-dimethylallyl-L-tryptophan. The second step is catalyzed by the methyltransferase easF that methylates 4-dimethylallyl-L-tryptophan in the presence of S-adenosyl-L-methionine, resulting in the formation of 4-dimethylallyl-L-abrine. The catalase easC and the FAD-dependent oxidoreductase easE then transform 4-dimethylallyl-L-abrine to chanoclavine-I which is further oxidized by easD in the presence of NAD(+), resulting in the formation of chanoclavine-I aldehyde. Agroclavine dehydrogenase easG then mediates the conversion of chanoclavine-I aldehyde to agroclavine via a non-enzymatic adduct reaction: the substrate is an iminium intermediate that is formed spontaneously from chanoclavine-I aldehyde in the presence of glutathione. The presence of easA is not required to complete this reaction. Further conversion of agroclavine to paspalic acid is a two-step process involving oxidation of agroclavine to elymoclavine and of elymoclavine to paspalic acid, the second step being performed by the elymoclavine oxidase cloA. Paspalic acid is then further converted to D-lysergic acid. Ergopeptines are assembled from D-lysergic acid and three different amino acids by the D-lysergyl-peptide-synthetases composed each of a monomudular and a trimodular nonribosomal peptide synthetase subunit. LpsB and lpsC encode the monomodular subunits responsible for D-lysergic acid activation and incorporation into the ergopeptine backbone. LpsA1 and A2 subunits encode the trimodular nonribosomal peptide synthetase assembling the tripeptide portion of ergopeptines. LpsA1 is responsible for formation of the major ergopeptine, ergotamine, and lpsA2 for alpha-ergocryptine, the minor ergopeptine of the total alkaloid mixture elaborated by C.purpurea. D-lysergyl-tripeptides are assembled by the nonribosomal peptide synthetases and released as N-(D-lysergyl-aminoacyl)-lactams. Cyclolization of the D-lysergyl-tripeptides is performed by the Fe(2+)/2-ketoglutarate-dependent dioxygenase easH which introduces a hydroxyl group into N-(D-lysergyl-aminoacyl)-lactam at alpha-C of the aminoacyl residue followed by spontaneous condensation with the terminal lactam carbonyl group. The polypeptide is Chanoclavine-I dehydrogenase easD (Claviceps purpurea (strain 20.1) (Ergot fungus)).